The primary structure comprises 189 residues: ATP synthase subunit b 1 (189 aa).

The helical transmembrane segment at 32-52 (TYFASQLFWLTIAFVILYIAL) threads the bilayer.

This sequence belongs to the ATPase B chain family. F-type ATPases have 2 components, F(1) - the catalytic core - and F(0) - the membrane proton channel. F(1) has five subunits: alpha(3), beta(3), gamma(1), delta(1), epsilon(1). F(0) has three main subunits: a(1), b(2) and c(10-14). The alpha and beta chains form an alternating ring which encloses part of the gamma chain. F(1) is attached to F(0) by a central stalk formed by the gamma and epsilon chains, while a peripheral stalk is formed by the delta and b chains.

The protein resides in the cell inner membrane. Functionally, f(1)F(0) ATP synthase produces ATP from ADP in the presence of a proton or sodium gradient. F-type ATPases consist of two structural domains, F(1) containing the extramembraneous catalytic core and F(0) containing the membrane proton channel, linked together by a central stalk and a peripheral stalk. During catalysis, ATP synthesis in the catalytic domain of F(1) is coupled via a rotary mechanism of the central stalk subunits to proton translocation. Its function is as follows. Component of the F(0) channel, it forms part of the peripheral stalk, linking F(1) to F(0). This is ATP synthase subunit b 1 from Maricaulis maris (strain MCS10) (Caulobacter maris).